A 172-amino-acid polypeptide reads, in one-letter code: Peptide deformylase 1 (172 aa).

The Fe cation site is built by cysteine 91 and histidine 133. Residue glutamate 134 is part of the active site. Histidine 137 provides a ligand contact to Fe cation.

It belongs to the polypeptide deformylase family. Fe(2+) serves as cofactor.

The catalysed reaction is N-terminal N-formyl-L-methionyl-[peptide] + H2O = N-terminal L-methionyl-[peptide] + formate. Removes the formyl group from the N-terminal Met of newly synthesized proteins. Requires at least a dipeptide for an efficient rate of reaction. N-terminal L-methionine is a prerequisite for activity but the enzyme has broad specificity at other positions. The polypeptide is Peptide deformylase 1 (Vibrio parahaemolyticus serotype O3:K6 (strain RIMD 2210633)).